Consider the following 202-residue polypeptide: LexA repressor (202 aa).

Positions 28–48 (RAEIAQRLGFRSPNAAEEHLK) form a DNA-binding region, H-T-H motif. Residues Ser119 and Lys156 each act as for autocatalytic cleavage activity in the active site.

Belongs to the peptidase S24 family. In terms of assembly, homodimer.

It catalyses the reaction Hydrolysis of Ala-|-Gly bond in repressor LexA.. Represses a number of genes involved in the response to DNA damage (SOS response), including recA and lexA. Binds to the 16 bp palindromic sequence 5'-CTGTATATATATACAG-3'. In the presence of single-stranded DNA, RecA interacts with LexA causing an autocatalytic cleavage which disrupts the DNA-binding part of LexA, leading to derepression of the SOS regulon and eventually DNA repair. The sequence is that of LexA repressor from Salmonella agona (strain SL483).